The primary structure comprises 513 residues: Maturase K (513 aa).

Belongs to the intron maturase 2 family. MatK subfamily.

The protein resides in the plastid. The protein localises to the chloroplast. Functionally, usually encoded in the trnK tRNA gene intron. Probably assists in splicing its own and other chloroplast group II introns. The chain is Maturase K from Panicum capillare (Witchgrass).